The chain runs to 73 residues: Disintegrin barbourin (73 aa).

Residues 1-73 form the Disintegrin domain; sequence EAGEECDCGS…ADCPRNGLYG (73 aa). 6 disulfide bridges follow: Cys-6–Cys-21, Cys-8–Cys-16, Cys-15–Cys-38, Cys-29–Cys-35, Cys-34–Cys-59, and Cys-47–Cys-66. The Cell attachment site; atypical (KGD) signature appears at 51–53; the sequence is KGD.

The protein belongs to the venom metalloproteinase (M12B) family. P-II subfamily. P-IIa sub-subfamily. As to quaternary structure, monomer. In terms of tissue distribution, expressed by the venom gland.

It is found in the secreted. Its function is as follows. Inhibitor of ligand binding to the integrins alpha-IIb/beta-3 (ITGA2B/ITGB3). Competition with fibrinogen for the RGD recognition sites on the alpha-IIb/beta-3 integrin results in the inhibition of platelet aggregation induced by ADP, thrombin, platelet-activating factor and collagen. The polypeptide is Disintegrin barbourin (Sistrurus miliarius barbouri (Dusky pigmy rattlesnake)).